A 321-amino-acid polypeptide reads, in one-letter code: D-alanine--D-alanine ligase (321 aa).

Positions 121–315 (RSWFLTNNIN…FVNLIEEILK (195 aa)) constitute an ATP-grasp domain. 148-199 (IKRPYVIKPFTQGSSIGVEVIFEEDDFNFANYDFPYGDEVIIEKYIKGRELQ) lines the ATP pocket. Glu268, Glu282, and Asn284 together coordinate Mg(2+).

The protein belongs to the D-alanine--D-alanine ligase family. Mg(2+) serves as cofactor. Mn(2+) is required as a cofactor.

It is found in the cytoplasm. It catalyses the reaction 2 D-alanine + ATP = D-alanyl-D-alanine + ADP + phosphate + H(+). It functions in the pathway cell wall biogenesis; peptidoglycan biosynthesis. Its function is as follows. Cell wall formation. The sequence is that of D-alanine--D-alanine ligase from Rickettsia bellii (strain OSU 85-389).